A 379-amino-acid polypeptide reads, in one-letter code: PqqA peptide cyclase (379 aa).

One can recognise a Radical SAM core domain in the interval 8–220 (LPAPIGLLAE…IRVVEEARER (213 aa)). Cysteine 22, cysteine 26, and cysteine 29 together coordinate [4Fe-4S] cluster.

Belongs to the radical SAM superfamily. PqqE family. Interacts with PqqD. The interaction is necessary for activity of PqqE. [4Fe-4S] cluster serves as cofactor.

It carries out the reaction [PQQ precursor protein] + S-adenosyl-L-methionine = E-Y cross-linked-[PQQ precursor protein] + 5'-deoxyadenosine + L-methionine + H(+). It participates in cofactor biosynthesis; pyrroloquinoline quinone biosynthesis. Catalyzes the cross-linking of a glutamate residue and a tyrosine residue in the PqqA protein as part of the biosynthesis of pyrroloquinoline quinone (PQQ). The polypeptide is PqqA peptide cyclase (Methylobacterium nodulans (strain LMG 21967 / CNCM I-2342 / ORS 2060)).